A 330-amino-acid chain; its full sequence is Putative acetyltransferase ORF330 (330 aa).

10 helical membrane-spanning segments follow: residues 29-49 (GFAS…LPLS), 50-70 (IFRP…FLLL), 90-110 (IYPL…YYFH), 118-138 (LFLH…SYVF), 163-183 (FLLA…IVTL), 190-210 (LLYF…IAYI), 225-245 (ISFL…NEFL), 252-272 (VVVY…PPKV), 273-293 (LSKV…WHLL), and 297-317 (LLGV…EFPL).

The protein resides in the host membrane. This Acidianus convivator (ATV) protein is Putative acetyltransferase ORF330.